We begin with the raw amino-acid sequence, 137 residues long: uncharacterized protein (137 aa).

A Ubiquitin-like domain is found at 58 to 135 (VHVVAKTVRP…EVNLQMFLMN (78 aa)).

The protein localises to the cytoplasm. It is found in the nucleus. This is an uncharacterized protein from Schizosaccharomyces pombe (strain 972 / ATCC 24843) (Fission yeast).